Consider the following 394-residue polypeptide: Cytochrome b561 and DOMON domain-containing protein At4g12980 (394 aa).

The first 24 residues, 1 to 24 (MDSSYLRISLSFLFWALLLSPAVS), serve as a signal peptide directing secretion. In terms of domain architecture, DOMON spans 49–169 (LKAILHYSYD…GKVNQVWQVG (121 aa)). One can recognise a Cytochrome b561 domain in the interval 184–381 (GPNLNSVGSL…LEVVTWVIVL (198 aa)). Transmembrane regions (helical) follow at residues 220 to 240 (IHGI…AMIA) and 252 to 272 (AWFY…VAGW). His-221, His-257, and His-290 together coordinate heme b. A helical transmembrane segment spans residues 292–312 (NIGICLFSIATLQMFAMLLRP). His-326 contributes to the heme b binding site. The next 2 helical transmembrane spans lie at 328-348 (GVGY…LSIL) and 361-381 (VIGT…VIVL).

Heme b is required as a cofactor.

It is found in the membrane. In terms of biological role, may act as a catecholamine-responsive trans-membrane electron transporter. The sequence is that of Cytochrome b561 and DOMON domain-containing protein At4g12980 from Arabidopsis thaliana (Mouse-ear cress).